Reading from the N-terminus, the 182-residue chain is MEMVVLVDHAGDPIGVQSKADVHGQSTPRHLAFSCHVVDEQGRLLVTRRALKKRTWPGVWTNSFCGHPAPGETLEDAVSRRAEFELGLSIDHITCAIPNFSYVARDASGIEENEHCPVFIARAVSSLTPNPAEVAEAQWTSSSELKSAIDAAPWAFSPWLVEHFTELQPLIAEHIVEAEDDD.

Positions 23 and 30 each coordinate Mn(2+). The 135-residue stretch at 28–162 (PRHLAFSCHV…PWAFSPWLVE (135 aa)) folds into the Nudix hydrolase domain. The active site involves C65. C65 is a Mg(2+) binding site. H67 contacts Mn(2+). E85 contributes to the Mg(2+) binding site. Mn(2+) is bound by residues E112 and E114. The active site involves E114.

Belongs to the IPP isomerase type 1 family. It depends on Mg(2+) as a cofactor. Mn(2+) serves as cofactor.

It is found in the cytoplasm. The catalysed reaction is isopentenyl diphosphate = dimethylallyl diphosphate. The protein operates within isoprenoid biosynthesis; dimethylallyl diphosphate biosynthesis; dimethylallyl diphosphate from isopentenyl diphosphate: step 1/1. Catalyzes the 1,3-allylic rearrangement of the homoallylic substrate isopentenyl (IPP) to its highly electrophilic allylic isomer, dimethylallyl diphosphate (DMAPP). The protein is Isopentenyl-diphosphate Delta-isomerase of Brevibacterium linens.